The chain runs to 240 residues: Arginine transport ATP-binding protein ArtM (240 aa).

One can recognise an ABC transporter domain in the interval 2 to 236; that stretch reads IKVEKLSKSF…PKSKRAQDFL (235 aa). 34–41 serves as a coordination point for ATP; the sequence is GPSGSGKS.

This sequence belongs to the ABC transporter superfamily.

Its subcellular location is the cell membrane. In terms of biological role, part of a binding-protein-dependent transport system for arginine. Probably responsible for energy coupling to the transport system. The chain is Arginine transport ATP-binding protein ArtM (artM) from Bacillus subtilis (strain 168).